A 205-amino-acid polypeptide reads, in one-letter code: Small ribosomal subunit protein uS4 (205 aa).

The disordered stretch occupies residues 18–46; sequence NIWGRPKSPVNRREYGPGQHGQRRKGKLS. Residues 94 to 157 enclose the S4 RNA-binding domain; that stretch reads RRLDTVVYRS…KQLAIVLEAN (64 aa).

Belongs to the universal ribosomal protein uS4 family. Part of the 30S ribosomal subunit. Contacts protein S5. The interaction surface between S4 and S5 is involved in control of translational fidelity.

Its function is as follows. One of the primary rRNA binding proteins, it binds directly to 16S rRNA where it nucleates assembly of the body of the 30S subunit. Functionally, with S5 and S12 plays an important role in translational accuracy. This is Small ribosomal subunit protein uS4 from Rhodopseudomonas palustris (strain BisB5).